The primary structure comprises 198 residues: ATP-dependent Clp protease proteolytic subunit (198 aa).

Serine 101 (nucleophile) is an active-site residue. Residue histidine 126 is part of the active site.

The protein belongs to the peptidase S14 family. As to quaternary structure, component of the chloroplastic Clp protease core complex.

The protein resides in the plastid. The protein localises to the chloroplast stroma. The catalysed reaction is Hydrolysis of proteins to small peptides in the presence of ATP and magnesium. alpha-casein is the usual test substrate. In the absence of ATP, only oligopeptides shorter than five residues are hydrolyzed (such as succinyl-Leu-Tyr-|-NHMec, and Leu-Tyr-Leu-|-Tyr-Trp, in which cleavage of the -Tyr-|-Leu- and -Tyr-|-Trp bonds also occurs).. Its function is as follows. Cleaves peptides in various proteins in a process that requires ATP hydrolysis. Has a chymotrypsin-like activity. Plays a major role in the degradation of misfolded proteins. The chain is ATP-dependent Clp protease proteolytic subunit from Solanum bulbocastanum (Wild potato).